A 503-amino-acid chain; its full sequence is Probable cytosol aminopeptidase (503 aa).

Residues Lys270 and Asp275 each coordinate Mn(2+). Residue Lys282 is part of the active site. The Mn(2+) site is built by Asp293, Asp352, and Glu354. The active site involves Arg356.

It belongs to the peptidase M17 family. Mn(2+) is required as a cofactor.

It is found in the cytoplasm. The enzyme catalyses Release of an N-terminal amino acid, Xaa-|-Yaa-, in which Xaa is preferably Leu, but may be other amino acids including Pro although not Arg or Lys, and Yaa may be Pro. Amino acid amides and methyl esters are also readily hydrolyzed, but rates on arylamides are exceedingly low.. It catalyses the reaction Release of an N-terminal amino acid, preferentially leucine, but not glutamic or aspartic acids.. In terms of biological role, presumably involved in the processing and regular turnover of intracellular proteins. Catalyzes the removal of unsubstituted N-terminal amino acids from various peptides. This is Probable cytosol aminopeptidase from Escherichia coli O139:H28 (strain E24377A / ETEC).